We begin with the raw amino-acid sequence, 1188 residues long: MEPNSLQWVGSPCGLHGPYIFYKAFQFHLEGKPRILSLGDFFFVRCTPKDPICIAELQLLWEERTSRQLLSSSKLYFLPEDTPQGRNSDHGEDEVIAVSEKVIVKLEDLVKWAHSDFSKWRCGLRATPVKTEAFGRNGQKEALLRYRQSTLNSGLNFKDVLKEKADLGEDEEETNVIVLSYPQYCRYRSMLKRIQDKPSSILTDQFALALGGIAVVSRNPQILYCRDTFDHPTLIENESVCDEFAPNLKGRPRKKKTCPQRRDSFSGSKDPNNNCDGKVISKVKGEARSALTKPKNNHNNCKKTSNEEKPKLSIGEECRADEQAFLVALYKYMKERKTPIERIPYLGFKQINLWTMFQAAQKLGGYETITARRQWKHIYDELGGNPGSTSAATCTRRHYERLILPYERFIKGEEDKPLPPIKPRKQENNTQENENKTKVSGNKRIKQEMAKNKKEKENTPKPQDTSEVSSEQRKEEETLNHKSAPEPLPAPEVKGKPEGHKDLGARAPVSRADPEKANETDQGSNSEKEAEEMGDKGLAPLLPSPPLPPEKDSAPTPGAGKQPLASPSTQMDSKQEAKPCCFTESPEKDLQGAPFSSFSATKPPLTSQNEAEEEQLPATANYIANCTVKVDQLGSDDIHTALKQTPKVLVVQSFDMFKDKDLTGPMNENHGLNYTPLLYSRGNPGIMSPLAKKKLLSQVSGASLSSSYPYGSPPPLISKKKLIAREDLCSGLSQGHHSQSSDHTAVSRPSVIQHVQSFKNKASEDRKSINDIFKHDKLSRSDAHRCGFSKHQLGSLADSYILKQETQEGKDKLLEKRAVSHAHVPSFLADFYSSPHLHSLYRHTEHHLHNEQSSKYAARDAYQESENGAFLSHKHPEKIHVNYLASLHLQDKKVAAAEASTDDQPTDLSLPKNPHKLTSKVLGLAHSTSGSQEIKGASQFQVVSNQSRDCHPKACRVSPMTMSGPKKYPESLARSGKPHQVRLENFRKMEGMVHPILHRKMSPQNIGAARPIKRSLEDLDLVIAGKKARAVSPLDPAKEASGKEKASEQESEGNKGAYGGHSGAASEGHKLPLSTPIFPGLYSGSLCNSGLNSRLPAGYSHSLQYLKNQTVLSPLMQPLAFHSLVMQRGIFTSPTNSQQLYRHLAAATPVGSSYGDLLHNSIYPLAGINPQAAFPSSQLSSVHPSTKL.

Lys-130 is covalently cross-linked (Glycyl lysine isopeptide (Lys-Gly) (interchain with G-Cter in SUMO2)). The tract at residues 251-278 (RPRKKKTCPQRRDSFSGSKDPNNNCDGK) is disordered. Phosphoserine is present on Ser-264. A compositionally biased stretch (polar residues) spans 265 to 275 (FSGSKDPNNNC). The region spanning 319–411 (RADEQAFLVA…LILPYERFIK (93 aa)) is the ARID domain. N6,N6-dimethyllysine is present on Lys-337. Residues 413 to 614 (EEDKPLPPIK…LTSQNEAEEE (202 aa)) are disordered. Basic and acidic residues-rich tracts occupy residues 445-459 (IKQE…KENT), 470-484 (SEQR…HKSA), 493-504 (VKGKPEGHKDLG), and 526-535 (SEKEAEEMGD). Lys-446 is covalently cross-linked (Glycyl lysine isopeptide (Lys-Gly) (interchain with G-Cter in SUMO2)). Residues Lys-494 and Lys-496 each participate in a glycyl lysine isopeptide (Lys-Gly) (interchain with G-Cter in SUMO2) cross-link. Residues 594-609 (PFSSFSATKPPLTSQN) show a composition bias toward polar residues. Glycyl lysine isopeptide (Lys-Gly) (interchain with G-Cter in SUMO2) cross-links involve residues Lys-767, Lys-774, Lys-803, Lys-810, Lys-893, Lys-916, Lys-920, and Lys-935. The tract at residues 958–978 (SPMTMSGPKKYPESLARSGKP) is disordered. Residues Lys-988, Lys-1000, and Lys-1013 each participate in a glycyl lysine isopeptide (Lys-Gly) (interchain with G-Cter in SUMO2) cross-link. Residues 1030 to 1066 (AVSPLDPAKEASGKEKASEQESEGNKGAYGGHSGAAS) form a disordered region. Position 1032 is a phosphoserine (Ser-1032). Basic and acidic residues predominate over residues 1036 to 1048 (PAKEASGKEKASE). Glycyl lysine isopeptide (Lys-Gly) (interchain with G-Cter in SUMO2) cross-links involve residues Lys-1055 and Lys-1070. A Phosphoserine modification is found at Ser-1133.

Belongs to the ARID5B family. Post-translationally, methylation at Lys-337 prevents DNA-binding. Demethylation by PHF2 promotes recruitment of the PHF2-ARID5B complex to promoters. Widely expressed. Expressed in lung, heart, small intestine, kidney, muscle and brain. Also expressed in spleen, thymus, endocrine organs and in uterus and testis.

Its subcellular location is the nucleus. Its function is as follows. Transcription coactivator that binds to the 5'-AATA[CT]-3' core sequence and plays a key role in adipogenesis and liver development. Acts by forming a complex with phosphorylated PHF2, which mediates demethylation at Lys-337, leading to target the PHF2-ARID5B complex to target promoters, where PHF2 mediates demethylation of dimethylated 'Lys-9' of histone H3 (H3K9me2), followed by transcription activation of target genes. The PHF2-ARID5B complex acts as a coactivator of HNF4A in liver. Required for adipogenesis: regulates triglyceride metabolism in adipocytes by regulating expression of adipogenic genes. Overexpression leads to induction of smooth muscle marker genes, suggesting that it may also act as a regulator of smooth muscle cell differentiation and proliferation. This chain is AT-rich interactive domain-containing protein 5B (Arid5b), found in Mus musculus (Mouse).